We begin with the raw amino-acid sequence, 840 residues long: Phosphatidylglycerol lysyltransferase (840 aa).

The Cytoplasmic segment spans residues 1–8 (MNQEVKNK). Residues 9–29 (IFSILKITFATALFIFVAITL) traverse the membrane as a helical segment. The Extracellular portion of the chain corresponds to 30–52 (YRELSGINFKDTLVEFSKINRMS). A helical transmembrane segment spans residues 53–73 (LVLLFIGGGASLVILSMYDVI). At 74–89 (LSRALKMDISLGKVLR) the chain is on the cytoplasmic side. The chain crosses the membrane as a helical span at residues 90-110 (VSYIINALNAIVGFGGFIGAG). Residues 111 to 128 (VRAMVYKNYTHDKKKLVH) lie on the Extracellular side of the membrane. A helical membrane pass occupies residues 129–149 (FISLILISMLTGLSLLSLLIV). The Cytoplasmic portion of the chain corresponds to 150–161 (FHVFDASLILDK). A helical membrane pass occupies residues 162 to 182 (ITWVRWVLYVVSFFLPLFIIY). Residues 183–200 (SMVRPPDKNNRFVGLYCT) lie on the Extracellular side of the membrane. The helical transmembrane segment at 201–221 (LVSCVEWLAAAVVLYFCGVIV) threads the bilayer. The Cytoplasmic segment spans residues 222 to 229 (DAHVSFMS). The helical transmembrane segment at 230 to 250 (FIAIFIIAALSGLVSFIPGGF) threads the bilayer. Residues 251-271 (GAFDLVVLLGFKTLGVPEEKV) lie on the Extracellular side of the membrane. Residues 272–292 (LLMLLLYRFAYYFVPVIIALI) form a helical membrane-spanning segment. Topologically, residues 293–337 (LSSFEFGTSAKKYIEGSKYFIPAKDVTSFLMSYQKDIIAKIPSLS) are cytoplasmic. A helical transmembrane segment spans residues 338-358 (LAILVFFTSMIFFVNNLTIVY). Over 359–369 (DALYDGNHLTY) the chain is Extracellular. Residues 370–390 (YILLAIHTSACLLLLLNVVGI) form a helical membrane-spanning segment. Residues 391–394 (YKQS) lie on the Cytoplasmic side of the membrane. The next 2 membrane-spanning stretches (helical) occupy residues 395–415 (RRAIIFAMISILLITVATFFT) and 416–436 (YASYILITWLAIIFVLLIVAF). Residues 437 to 450 (RRARRLKRPVRMRN) lie on the Cytoplasmic side of the membrane. Residues 451–471 (IVAMLLFSLFILYVNHIFIAG) form a helical membrane-spanning segment. At 472-489 (TLYALDIYTIEMHTSVLR) the chain is on the extracellular side. The chain crosses the membrane as a helical span at residues 490 to 510 (YYFWLTILIIAIIIGMIAWLF). Residues 511–840 (DYQFSKVRIS…SKVMRVIRHK (330 aa)) lie on the Cytoplasmic side of the membrane.

Belongs to the LPG synthase family.

The protein localises to the cell membrane. The catalysed reaction is L-lysyl-tRNA(Lys) + a 1,2-diacyl-sn-glycero-3-phospho-(1'-sn-glycerol) = a 1,2-diacyl-sn-glycero-3-phospho-1'-(3'-O-L-lysyl)-sn-glycerol + tRNA(Lys). Its function is as follows. Catalyzes the transfer of a lysyl group from L-lysyl-tRNA(Lys) to membrane-bound phosphatidylglycerol (PG), which produces lysylphosphatidylglycerol (LPG), a major component of the bacterial membrane with a positive net charge. LPG synthesis contributes to bacterial virulence as it is involved in the resistance mechanism against cationic antimicrobial peptides (CAMP) produces by the host's immune system (defensins, cathelicidins) and by the competing microorganisms (bacteriocins). In fact, the modification of anionic phosphatidylglycerol with positively charged L-lysine results in repulsion of the peptides. The sequence is that of Phosphatidylglycerol lysyltransferase (mprF) from Staphylococcus aureus (strain COL).